The primary structure comprises 162 residues: Protein-export protein SecB 2 (162 aa).

The protein belongs to the SecB family. Homotetramer, a dimer of dimers. One homotetramer interacts with 1 SecA dimer.

The protein resides in the cytoplasm. Functionally, one of the proteins required for the normal export of preproteins out of the cell cytoplasm. It is a molecular chaperone that binds to a subset of precursor proteins, maintaining them in a translocation-competent state. It also specifically binds to its receptor SecA. This Polaromonas naphthalenivorans (strain CJ2) protein is Protein-export protein SecB 2.